The primary structure comprises 157 residues: Ribosomal RNA large subunit methyltransferase H (157 aa).

S-adenosyl-L-methionine is bound by residues L73, G105, and 124–129; that span reads LSKMTF.

It belongs to the RNA methyltransferase RlmH family. As to quaternary structure, homodimer.

The protein resides in the cytoplasm. It catalyses the reaction pseudouridine(1915) in 23S rRNA + S-adenosyl-L-methionine = N(3)-methylpseudouridine(1915) in 23S rRNA + S-adenosyl-L-homocysteine + H(+). In terms of biological role, specifically methylates the pseudouridine at position 1915 (m3Psi1915) in 23S rRNA. This is Ribosomal RNA large subunit methyltransferase H from Parabacteroides distasonis (strain ATCC 8503 / DSM 20701 / CIP 104284 / JCM 5825 / NCTC 11152).